A 162-amino-acid chain; its full sequence is uncharacterized protein (162 aa).

A signal peptide spans 1 to 34; that stretch reads MAREVISTSILMIATVVAVTAAIMVILPAVKDLA.

This is an uncharacterized protein from Archaeoglobus fulgidus (strain ATCC 49558 / DSM 4304 / JCM 9628 / NBRC 100126 / VC-16).